We begin with the raw amino-acid sequence, 909 residues long: ABC transporter B family member 1 (909 aa).

The disordered stretch occupies residues 1 to 36 (MTKKNFNDEENESLLETYNKQQQKQSISTTNRSDQK). The span at 14–36 (LLETYNKQQQKQSISTTNRSDQK) shows a compositional bias: polar residues. A helical membrane pass occupies residues 85 to 105 (LFIQIVSLVILAGYLISINAL). The span at 125 to 134 (TDSGSVSPTS) shows a compositional bias: low complexity. The segment at 125-147 (TDSGSVSPTSTPSPTPTPTPSPT) is disordered. Residues 135–145 (TPSPTPTPTPS) show a composition bias toward pro residues. 8 helical membrane passes run 182 to 202 (FSTFDILLISYFISLFWLLLI), 206 to 226 (SFIYHTISYIITIIALIYNVI), 275 to 295 (IIIVIVLVGIPLMVLFLVLHI), 347 to 367 (LPIILAAMVALVFSSLTSLAM), 392 to 412 (LALVVIFVIGSISTLVRSWLF), 480 to 500 (VILLFITNWRLTLLMLGIVPV), 572 to 592 (GVFSGIVFLVAQLAIVLIVYV), and 607 to 627 (LTSFLLYTLSLAMSLAFISSL). Residues 350-633 (ILAAMVALVF…ISSLMTDFLK (284 aa)) form the ABC transmembrane type-1 domain. The ABC transporter domain occupies 666–902 (IELKDVEFSY…TDGIYHNLVK (237 aa)). Position 701–708 (701–708 (GPSGGGKS)) interacts with ATP.

This sequence belongs to the ABC transporter superfamily. ABCB family.

It localises to the membrane. This Dictyostelium discoideum (Social amoeba) protein is ABC transporter B family member 1 (abcB1).